Consider the following 357-residue polypeptide: MKKGSLAPNLKLSLPPPDEVNLSKFLTESGTFKDGDLLVNRDGVRIVSQSEVEAPSVIQPSDNQLCLADFEAVKVIGKGNGGIVRLVQHKWTGQFFALKVIQMNIEESMRKHIAQELRINQSSQCPYVVISYQSFFDNGAISIILEYMDGGSLADFLKKVKTIPERYLAAICKQVLKGLWYLHHEKHIIHRDLKPSNLLINHIGDVKITDFGVSAVLASTSGLANTFVGTYNYMSPERILGGAYGYRSDIWSLGLVLLECATGVFPYSPPQADEGWVNVYELMETIVDQPAPSAPPDQFSPQFCSFISACVQKDQKDRLSANELMRHPFITMYDDLDIDLGSYFTSAGPPLATLTEL.

One can recognise a Protein kinase domain in the interval 70-330 (FEAVKVIGKG…ANELMRHPFI (261 aa)). Residues 76 to 84 (IGKGNGGIV) and K99 contribute to the ATP site. The Proton acceptor role is filled by D192.

This sequence belongs to the protein kinase superfamily. STE Ser/Thr protein kinase family. MAP kinase kinase subfamily. Interacts with SIPK.

The enzyme catalyses L-tyrosyl-[protein] + ATP = O-phospho-L-tyrosyl-[protein] + ADP + H(+). The catalysed reaction is L-seryl-[protein] + ATP = O-phospho-L-seryl-[protein] + ADP + H(+). It carries out the reaction L-threonyl-[protein] + ATP = O-phospho-L-threonyl-[protein] + ADP + H(+). Its function is as follows. Phosphorylates myelin basic protein (MBP) in vitro. May be involved in disease resistance. This Nicotiana tabacum (Common tobacco) protein is Mitogen-activated protein kinase kinase SIPKK.